A 483-amino-acid chain; its full sequence is MAGGRRGPNRTSYCRTPLCEPGSAGGAVHGGIPSVSGVRSRARSSSSTGLSSPPLATQTVVPLRHCKIPDLPADRHLLFELQLFFCHLIALFVHYINIYKTVWWYPPSHPPSHTSLNFHLIDFNVLTLTTIVLARRLIGAIVREASQGGKSSVPHSLLLVATRFAVLTGTGWSLCRSIILLFRTHSFFNLLFLCYPFGMYIPFLQLGWDFRRPGLSHMPNTRDLASMDRGSKDYLHVLQHILRHHMPSAEPLPTHACCLSPDLIRSEVHYLKLDFNWRVREVLLSSMLSAYYVAFVPVWFVKSTQYYDKRWSCELFLQVSLSTSVILTQHLLPARYCDLLHKAAAHLGCWQKVDPALCSNMLQHSWMEECMWPQGVLVKHNKNVYKAVGHYNVAIPSDVSHFRFHFFFSNPLRVLNILTTLEGVLIFYQLYSLLSSEKWHHTISLALILFSNYYAFFKLLRDRIVLGKAYFYTAVPDCERKLN.

Residue N9 is glycosylated (N-linked (GlcNAc...) asparagine). 7 consecutive transmembrane segments (helical) span residues 76–96 (HLLFELQLFFCHLIALFVHYI), 114–134 (TSLNFHLIDFNVLTLTTIVLA), 158–182 (LLVATRFAVLTGTGWSLCRSIILLF), 187–207 (FFNLLFLCYPFGMYIPFLQLG), 281–301 (EVLLSSMLSAYYVAFVPVWFV), 414–434 (VLNILTTLEGVLIFYQLYSLL), and 440–460 (HHTISLALILFSNYYAFFKLL).

Belongs to the TMEM39 family.

The protein resides in the endoplasmic reticulum membrane. In terms of biological role, may protect the cells against DNA damage caused by exposure to the cold-warming stress and facilitates tissue damage repair during the recovery phase. The sequence is that of Transmembrane protein 39B from Xenopus tropicalis (Western clawed frog).